The following is a 241-amino-acid chain: Sugar fermentation stimulation protein homolog (241 aa).

Belongs to the SfsA family.

The sequence is that of Sugar fermentation stimulation protein homolog from Yersinia enterocolitica serotype O:8 / biotype 1B (strain NCTC 13174 / 8081).